The chain runs to 379 residues: Endonuclease III homolog 1, chloroplastic (379 aa).

The N-terminal 54 residues, 1-54 (MILLVNGGAATSIHPNAARFYRIGTMSRQIHGAVSSSKHISLKTQHPLSDSNSE), are a transit peptide targeting the chloroplast. In terms of domain architecture, HhH spans 244-272 (KYDGDIPSSLDDLLSLPGIGPKMAHLILH). Lys-265 serves as the catalytic Nucleophile; for N-glycosylase activity. 4 residues coordinate [4Fe-4S] cluster: Cys-340, Cys-347, Cys-350, and Cys-356.

It belongs to the Nth/MutY family. Requires [4Fe-4S] cluster as cofactor. Expressed at low levels in roots, stems, leaves and flowers.

The protein resides in the plastid. The protein localises to the chloroplast stroma. It is found in the chloroplast nucleoid. It carries out the reaction 2'-deoxyribonucleotide-(2'-deoxyribose 5'-phosphate)-2'-deoxyribonucleotide-DNA = a 3'-end 2'-deoxyribonucleotide-(2,3-dehydro-2,3-deoxyribose 5'-phosphate)-DNA + a 5'-end 5'-phospho-2'-deoxyribonucleoside-DNA + H(+). In terms of biological role, bifunctional DNA N-glycosylase with associated apurinic/apyrimidinic (AP) lyase function that catalyzes the first step in base excision repair (BER), the primary repair pathway for the repair of oxidative DNA damage. The DNA N-glycosylase activity releases the damaged DNA base from DNA by cleaving the N-glycosidic bond, leaving an AP site. The AP lyase activity cleaves the phosphodiester bond 3' to the AP site by a beta-elimination. Primarily recognizes and repairs oxidative base damage of pyrimidines. This chain is Endonuclease III homolog 1, chloroplastic, found in Arabidopsis thaliana (Mouse-ear cress).